The chain runs to 267 residues: Thiamine pyrophosphokinase 1 (267 aa).

This sequence belongs to the thiamine pyrophosphokinase family. In terms of tissue distribution, expressed in roots, leaves and flowers.

The protein resides in the cytoplasm. Its subcellular location is the cytosol. It carries out the reaction thiamine + ATP = thiamine diphosphate + AMP + H(+). It functions in the pathway cofactor biosynthesis; thiamine diphosphate biosynthesis; thiamine diphosphate from thiamine: step 1/1. Its function is as follows. Catalyzes the phosphorylation of thiamine to thiamine pyrophosphate (TPP). TPP is an active cofactor for enzymes involved in glycolysis and energy production. Plant leaves require high levels of TPP for photosynthesis and carbohydrate metabolism. This is Thiamine pyrophosphokinase 1 from Arabidopsis thaliana (Mouse-ear cress).